The primary structure comprises 212 residues: Pyridoxine/pyridoxamine 5'-phosphate oxidase (212 aa).

Substrate is bound by residues 8–11 and K66; that span reads RREY. Residues 61-66, 76-77, R82, K83, and Q105 contribute to the FMN site; these read RIVLLK and FT. The substrate site is built by Y123, R127, and S131. Residues 140 to 141 and W185 each bind FMN; that span reads QS. 191 to 193 lines the substrate pocket; that stretch reads RLH. FMN is bound at residue R195.

The protein belongs to the pyridoxamine 5'-phosphate oxidase family. Homodimer. FMN is required as a cofactor.

The enzyme catalyses pyridoxamine 5'-phosphate + O2 + H2O = pyridoxal 5'-phosphate + H2O2 + NH4(+). It carries out the reaction pyridoxine 5'-phosphate + O2 = pyridoxal 5'-phosphate + H2O2. It participates in cofactor metabolism; pyridoxal 5'-phosphate salvage; pyridoxal 5'-phosphate from pyridoxamine 5'-phosphate: step 1/1. It functions in the pathway cofactor metabolism; pyridoxal 5'-phosphate salvage; pyridoxal 5'-phosphate from pyridoxine 5'-phosphate: step 1/1. Functionally, catalyzes the oxidation of either pyridoxine 5'-phosphate (PNP) or pyridoxamine 5'-phosphate (PMP) into pyridoxal 5'-phosphate (PLP). In Shewanella oneidensis (strain ATCC 700550 / JCM 31522 / CIP 106686 / LMG 19005 / NCIMB 14063 / MR-1), this protein is Pyridoxine/pyridoxamine 5'-phosphate oxidase.